A 343-amino-acid polypeptide reads, in one-letter code: Methionine import ATP-binding protein MetN (343 aa).

Residues 2 to 241 enclose the ABC transporter domain; the sequence is IKLSNITKVF…PKTPLAQKFI (240 aa). 38–45 provides a ligand contact to ATP; it reads GASGAGKS.

Belongs to the ABC transporter superfamily. Methionine importer (TC 3.A.1.24) family. The complex is composed of two ATP-binding proteins (MetN), two transmembrane proteins (MetI) and a solute-binding protein (MetQ).

The protein localises to the cell inner membrane. The catalysed reaction is L-methionine(out) + ATP + H2O = L-methionine(in) + ADP + phosphate + H(+). It carries out the reaction D-methionine(out) + ATP + H2O = D-methionine(in) + ADP + phosphate + H(+). Its function is as follows. Part of the ABC transporter complex MetNIQ involved in methionine import. Responsible for energy coupling to the transport system. The chain is Methionine import ATP-binding protein MetN from Shigella boydii serotype 4 (strain Sb227).